We begin with the raw amino-acid sequence, 808 residues long: Sucrose synthase isoform 1 (808 aa).

Residues 277-754 (MVFNVVILSP…GLKRIQEKYT (478 aa)) are GT-B glycosyltransferase.

The protein belongs to the glycosyltransferase 1 family. Plant sucrose synthase subfamily. In terms of assembly, homotetramer. In terms of tissue distribution, expressed in stems, in roots at different developmental stages, and in flower buds, flowers and maturing seeds, with the highest levels in strong utilization sinks for sucrose such as growing stems and tap root tips.

The catalysed reaction is an NDP-alpha-D-glucose + D-fructose = a ribonucleoside 5'-diphosphate + sucrose + H(+). Its activity is regulated as follows. Fructose acts as a non-competitive inhibitor with an inhibition constant of 17.2 mM. In contrast, glucose inhibits uncompetitively with an inhibition constant of 4.3 mM. Sucrose-cleaving enzyme that provides UDP-glucose and fructose for various metabolic pathways. This is Sucrose synthase isoform 1 from Daucus carota (Wild carrot).